A 421-amino-acid chain; its full sequence is UDP-N-acetylglucosamine 1-carboxyvinyltransferase (421 aa).

Residue Lys-22 to Asn-23 participates in phosphoenolpyruvate binding. Arg-93 is a UDP-N-acetyl-alpha-D-glucosamine binding site. Catalysis depends on Cys-117, which acts as the Proton donor. The residue at position 117 (Cys-117) is a 2-(S-cysteinyl)pyruvic acid O-phosphothioketal. Residues Arg-122–Leu-126, Asp-308, and Ile-330 contribute to the UDP-N-acetyl-alpha-D-glucosamine site.

It belongs to the EPSP synthase family. MurA subfamily.

The protein localises to the cytoplasm. The catalysed reaction is phosphoenolpyruvate + UDP-N-acetyl-alpha-D-glucosamine = UDP-N-acetyl-3-O-(1-carboxyvinyl)-alpha-D-glucosamine + phosphate. It functions in the pathway cell wall biogenesis; peptidoglycan biosynthesis. Its function is as follows. Cell wall formation. Adds enolpyruvyl to UDP-N-acetylglucosamine. The sequence is that of UDP-N-acetylglucosamine 1-carboxyvinyltransferase from Pseudomonas putida (strain ATCC 700007 / DSM 6899 / JCM 31910 / BCRC 17059 / LMG 24140 / F1).